A 138-amino-acid polypeptide reads, in one-letter code: Translation initiation factor 5A (138 aa).

A Hypusine modification is found at Lys-42.

This sequence belongs to the eIF-5A family.

It is found in the cytoplasm. Its function is as follows. Functions by promoting the formation of the first peptide bond. The chain is Translation initiation factor 5A (eif5a) from Pyrobaculum aerophilum (strain ATCC 51768 / DSM 7523 / JCM 9630 / CIP 104966 / NBRC 100827 / IM2).